The following is a 344-amino-acid chain: Uroporphyrinogen decarboxylase (344 aa).

Substrate is bound by residues 26–30 (RQAGR), F45, D75, Y151, S206, and H320.

It belongs to the uroporphyrinogen decarboxylase family. In terms of assembly, homodimer.

The protein resides in the cytoplasm. It carries out the reaction uroporphyrinogen III + 4 H(+) = coproporphyrinogen III + 4 CO2. It functions in the pathway porphyrin-containing compound metabolism; protoporphyrin-IX biosynthesis; coproporphyrinogen-III from 5-aminolevulinate: step 4/4. In terms of biological role, catalyzes the decarboxylation of four acetate groups of uroporphyrinogen-III to yield coproporphyrinogen-III. This is Uroporphyrinogen decarboxylase from Staphylococcus epidermidis (strain ATCC 35984 / DSM 28319 / BCRC 17069 / CCUG 31568 / BM 3577 / RP62A).